The primary structure comprises 400 residues: MTQFASPVLHSLLDTDAYKLHMQQAVFHHYYDVHVAAEFRCRGDDLLGIYADAIREQVNAMQHLQLQEDEFQWLSGLPFFKADYLNWLRDFRYNPEQVCVTNDNGKLNIRLTGPWREVIMWEVPLLAVISELVHRYRSPEMGVAQALDALESKLVDFSALTADLNMSRFHLMDFGTRRRFSREVQQAIVKRLQQEPWFVGTSNYDLARRLSLTPMGTQAHEWFQAHQQISPDLATSQRAALAAWLNEYPNQLGIALTDCITMDAFLRDFGTEFATRYQGLRHDSGDPVEWGEKAIAHYQKLGIDPLSKTLVFSDNLDLKKAVDLYRHFSSRVQLSFGIGTRLTCDIPQVKPLNIVIKLVECNGKPVAKLSDSPGKTICHDKAFVRALRKAFDLPHIKKAS.

Phosphohistidine; by autocatalysis is present on His-220.

This sequence belongs to the NAPRTase family. Post-translationally, transiently phosphorylated on a His residue during the reaction cycle. Phosphorylation strongly increases the affinity for substrates and increases the rate of nicotinate D-ribonucleotide production. Dephosphorylation regenerates the low-affinity form of the enzyme, leading to product release.

The catalysed reaction is nicotinate + 5-phospho-alpha-D-ribose 1-diphosphate + ATP + H2O = nicotinate beta-D-ribonucleotide + ADP + phosphate + diphosphate. It participates in cofactor biosynthesis; NAD(+) biosynthesis; nicotinate D-ribonucleotide from nicotinate: step 1/1. Its function is as follows. Catalyzes the synthesis of beta-nicotinate D-ribonucleotide from nicotinate and 5-phospho-D-ribose 1-phosphate at the expense of ATP. The protein is Nicotinate phosphoribosyltransferase of Citrobacter koseri (strain ATCC BAA-895 / CDC 4225-83 / SGSC4696).